Here is a 386-residue protein sequence, read N- to C-terminus: Glutamate 5-kinase (386 aa).

K28 serves as a coordination point for ATP. 3 residues coordinate substrate: S68, D155, and N167. 187 to 188 lines the ATP pocket; that stretch reads TD. The PUA domain occupies 294 to 372; that stretch reads RGRLVLDDGA…EKIESILGYI (79 aa).

It belongs to the glutamate 5-kinase family.

It is found in the cytoplasm. It carries out the reaction L-glutamate + ATP = L-glutamyl 5-phosphate + ADP. It participates in amino-acid biosynthesis; L-proline biosynthesis; L-glutamate 5-semialdehyde from L-glutamate: step 1/2. Functionally, catalyzes the transfer of a phosphate group to glutamate to form L-glutamate 5-phosphate. This chain is Glutamate 5-kinase, found in Hahella chejuensis (strain KCTC 2396).